We begin with the raw amino-acid sequence, 196 residues long: Putative NADH dehydrogenase/NAD(P)H nitroreductase Smal_0358 (196 aa).

It belongs to the nitroreductase family. HadB/RutE subfamily. FMN is required as a cofactor.

The sequence is that of Putative NADH dehydrogenase/NAD(P)H nitroreductase Smal_0358 from Stenotrophomonas maltophilia (strain R551-3).